Consider the following 283-residue polypeptide: MSVQTLTLPSPAKLNLMLHILGRREDGYHELQTLFQFLDYGDELTFAVRDDGVIQLHTEFEGVPHDSNLIVKAAKKLQAQSSCPLGIDIWIDKILPMGGGIGGGSSNAATTLLGLNHLWRLGWDDDRLAALGLTLGADVPVFVRGHAAFAEGVGEKLTPEYPEEPWYVVLVPQVSVSTAEIFSDPLLTRNSPPIKVRPVPKGNSRNDCLPVVARRYPEVRNALNLLGKFTEAKLTGTGSCVFGGFPSKAEADKVSALLTETLTGFVAKGSNVSMLHRKLQSLL.

The active site involves Lys13. 96–106 (PMGGGIGGGSS) is a binding site for ATP. The active site involves Asp138.

This sequence belongs to the GHMP kinase family. IspE subfamily.

It carries out the reaction 4-CDP-2-C-methyl-D-erythritol + ATP = 4-CDP-2-C-methyl-D-erythritol 2-phosphate + ADP + H(+). The protein operates within isoprenoid biosynthesis; isopentenyl diphosphate biosynthesis via DXP pathway; isopentenyl diphosphate from 1-deoxy-D-xylulose 5-phosphate: step 3/6. Functionally, catalyzes the phosphorylation of the position 2 hydroxy group of 4-diphosphocytidyl-2C-methyl-D-erythritol. The sequence is that of 4-diphosphocytidyl-2-C-methyl-D-erythritol kinase from Pseudomonas fluorescens (strain SBW25).